The following is a 455-amino-acid chain: Probable glycine dehydrogenase (decarboxylating) subunit 1 (455 aa).

Belongs to the GcvP family. N-terminal subunit subfamily. As to quaternary structure, the glycine cleavage system is composed of four proteins: P, T, L and H. In this organism, the P 'protein' is a heterodimer of two subunits.

It catalyses the reaction N(6)-[(R)-lipoyl]-L-lysyl-[glycine-cleavage complex H protein] + glycine + H(+) = N(6)-[(R)-S(8)-aminomethyldihydrolipoyl]-L-lysyl-[glycine-cleavage complex H protein] + CO2. In terms of biological role, the glycine cleavage system catalyzes the degradation of glycine. The P protein binds the alpha-amino group of glycine through its pyridoxal phosphate cofactor; CO(2) is released and the remaining methylamine moiety is then transferred to the lipoamide cofactor of the H protein. This chain is Probable glycine dehydrogenase (decarboxylating) subunit 1, found in Francisella philomiragia subsp. philomiragia (strain ATCC 25017 / CCUG 19701 / FSC 153 / O#319-036).